A 425-amino-acid polypeptide reads, in one-letter code: Enolase (425 aa).

Gln-161 contacts (2R)-2-phosphoglycerate. Glu-203 (proton donor) is an active-site residue. The Mg(2+) site is built by Asp-240, Glu-283, and Asp-310. 4 residues coordinate (2R)-2-phosphoglycerate: Lys-335, Arg-364, Ser-365, and Lys-386. Catalysis depends on Lys-335, which acts as the Proton acceptor.

Belongs to the enolase family. In terms of assembly, component of the RNA degradosome, a multiprotein complex involved in RNA processing and mRNA degradation. Mg(2+) serves as cofactor.

Its subcellular location is the cytoplasm. The protein localises to the secreted. The protein resides in the cell surface. It carries out the reaction (2R)-2-phosphoglycerate = phosphoenolpyruvate + H2O. It functions in the pathway carbohydrate degradation; glycolysis; pyruvate from D-glyceraldehyde 3-phosphate: step 4/5. In terms of biological role, catalyzes the reversible conversion of 2-phosphoglycerate (2-PG) into phosphoenolpyruvate (PEP). It is essential for the degradation of carbohydrates via glycolysis. The sequence is that of Enolase from Ruthia magnifica subsp. Calyptogena magnifica.